Reading from the N-terminus, the 156-residue chain is MQIIEGKLHLQGNEKVAILTSRFNHIITDRLQEGAIDCFKRHGGDENLLDIVLVPGAYELPFILERLLGSEKYDGVCVLGAIIRGGTPHFDYVSAEATKGIANAMLKYSMPVSFGVLTTDNVEQAIERAGSKAGNKGFEAMSTLIELLSLCQTLKG.

5-amino-6-(D-ribitylamino)uracil contacts are provided by residues phenylalanine 23, 57-59 (AYE), and 81-83 (AII). A (2S)-2-hydroxy-3-oxobutyl phosphate-binding site is contributed by 86-87 (GT). Histidine 89 acts as the Proton donor in catalysis. Phenylalanine 114 provides a ligand contact to 5-amino-6-(D-ribitylamino)uracil. Arginine 128 lines the (2S)-2-hydroxy-3-oxobutyl phosphate pocket.

This sequence belongs to the DMRL synthase family.

It carries out the reaction (2S)-2-hydroxy-3-oxobutyl phosphate + 5-amino-6-(D-ribitylamino)uracil = 6,7-dimethyl-8-(1-D-ribityl)lumazine + phosphate + 2 H2O + H(+). It participates in cofactor biosynthesis; riboflavin biosynthesis; riboflavin from 2-hydroxy-3-oxobutyl phosphate and 5-amino-6-(D-ribitylamino)uracil: step 1/2. Functionally, catalyzes the formation of 6,7-dimethyl-8-ribityllumazine by condensation of 5-amino-6-(D-ribitylamino)uracil with 3,4-dihydroxy-2-butanone 4-phosphate. This is the penultimate step in the biosynthesis of riboflavin. In Helicobacter pylori (strain Shi470), this protein is 6,7-dimethyl-8-ribityllumazine synthase.